We begin with the raw amino-acid sequence, 165 residues long: Ribonuclease H2 subunit C (165 aa).

Met-1 carries the N-acetylmethionine modification.

This sequence belongs to the RNase H2 subunit C family. In terms of assembly, the RNase H2 complex is a heterotrimer composed of the catalytic subunit RNASEH2A and the non-catalytic subunits RNASEH2B and RNASEH2C.

The protein resides in the nucleus. In terms of biological role, non catalytic subunit of RNase H2, an endonuclease that specifically degrades the RNA of RNA:DNA hybrids. Participates in DNA replication, possibly by mediating the removal of lagging-strand Okazaki fragment RNA primers during DNA replication. Mediates the excision of single ribonucleotides from DNA:RNA duplexes. The protein is Ribonuclease H2 subunit C (RNASEH2C) of Bos taurus (Bovine).